Reading from the N-terminus, the 245-residue chain is Uridylate kinase (245 aa).

ATP is bound at residue 12-15 (KISG). Gly-55 provides a ligand contact to UMP. Residues Gly-56 and Arg-60 each contribute to the ATP site. UMP contacts are provided by residues Asp-76 and 137–144 (AGAPYLTT). ATP is bound by residues Thr-164, Tyr-171, and Asp-174.

This sequence belongs to the UMP kinase family. Homohexamer.

It is found in the cytoplasm. It catalyses the reaction UMP + ATP = UDP + ADP. It participates in pyrimidine metabolism; CTP biosynthesis via de novo pathway; UDP from UMP (UMPK route): step 1/1. With respect to regulation, inhibited by UTP. Its function is as follows. Catalyzes the reversible phosphorylation of UMP to UDP. The protein is Uridylate kinase of Chlamydia trachomatis serovar D (strain ATCC VR-885 / DSM 19411 / UW-3/Cx).